The following is a 161-amino-acid chain: Allophycocyanin beta chain (161 aa).

An N4-methylasparagine modification is found at Asn-71. A (2R,3E)-phycocyanobilin-binding site is contributed by Cys-81.

The protein belongs to the phycobiliprotein family. As to quaternary structure, heterodimer of an alpha and a beta chain. In terms of processing, contains one covalently linked phycocyanobilin chromophore.

The protein localises to the plastid. The protein resides in the chloroplast thylakoid membrane. Functionally, light-harvesting photosynthetic bile pigment-protein from the phycobiliprotein complex. Allophycocyanin has a maximum absorption at approximately 650 nanometers. The sequence is that of Allophycocyanin beta chain (apcB) from Cyanidium caldarium (Red alga).